A 408-amino-acid polypeptide reads, in one-letter code: Succinylornithine transaminase (408 aa).

Residue Lys252 is modified to N6-(pyridoxal phosphate)lysine.

The protein belongs to the class-III pyridoxal-phosphate-dependent aminotransferase family. AstC subfamily. It depends on pyridoxal 5'-phosphate as a cofactor.

The enzyme catalyses N(2)-succinyl-L-ornithine + 2-oxoglutarate = N-succinyl-L-glutamate 5-semialdehyde + L-glutamate. Its pathway is amino-acid degradation; L-arginine degradation via AST pathway; L-glutamate and succinate from L-arginine: step 3/5. Functionally, catalyzes the transamination of N(2)-succinylornithine and alpha-ketoglutarate into N(2)-succinylglutamate semialdehyde and glutamate. Can also act as an acetylornithine aminotransferase. The polypeptide is Succinylornithine transaminase (Salmonella typhi).